Reading from the N-terminus, the 141-residue chain is HTH-type transcriptional repressor NsrR (141 aa).

Residues Gln-2–Lys-129 enclose the HTH rrf2-type domain. A DNA-binding region (H-T-H motif) is located at residues Ile-28 to Arg-51. [2Fe-2S] cluster-binding residues include Cys-91, Cys-96, and Cys-102.

Requires [2Fe-2S] cluster as cofactor.

In terms of biological role, nitric oxide-sensitive repressor of genes involved in protecting the cell against nitrosative stress. May require iron for activity. This Pectobacterium atrosepticum (strain SCRI 1043 / ATCC BAA-672) (Erwinia carotovora subsp. atroseptica) protein is HTH-type transcriptional repressor NsrR.